The chain runs to 297 residues: Bifunctional protein FolD 2 (297 aa).

Residues glycine 172 to glycine 174, threonine 199, and valine 240 each bind NADP(+).

The protein belongs to the tetrahydrofolate dehydrogenase/cyclohydrolase family. In terms of assembly, homodimer.

The enzyme catalyses (6R)-5,10-methylene-5,6,7,8-tetrahydrofolate + NADP(+) = (6R)-5,10-methenyltetrahydrofolate + NADPH. The catalysed reaction is (6R)-5,10-methenyltetrahydrofolate + H2O = (6R)-10-formyltetrahydrofolate + H(+). It participates in one-carbon metabolism; tetrahydrofolate interconversion. Functionally, catalyzes the oxidation of 5,10-methylenetetrahydrofolate to 5,10-methenyltetrahydrofolate and then the hydrolysis of 5,10-methenyltetrahydrofolate to 10-formyltetrahydrofolate. The chain is Bifunctional protein FolD 2 from Paenarthrobacter aurescens (strain TC1).